Consider the following 245-residue polypeptide: DNA polymerase III subunit epsilon (245 aa).

A divalent metal cation contacts are provided by Asp11 and Glu13. Substrate contacts are provided by Asp11, Glu13, Gln60, and His65. His161 acts as the Proton acceptor in catalysis. Asp166 lines the a divalent metal cation pocket. Position 166 (Asp166) interacts with substrate.

The DNA polymerase holoenzyme is a complex that contains 10 different types of subunits. These subunits are organized into 3 functionally essential subassemblies: the pol III core, the beta sliding clamp processivity factor and the clamp-loading complex. The pol III core (subunits alpha,epsilon and theta) contains the polymerase and the 3'-5' exonuclease proofreading activities. The polymerase is tethered to the template via the sliding clamp processivity factor. The clamp-loading complex assembles the beta processivity factor onto the primer template and plays a central role in the organization and communication at the replication fork. This complex contains delta, delta', psi and chi, and copies of either or both of two different DnaX proteins, gamma and tau. The composition of the holoenzyme is, therefore: (alpha,epsilon,theta)[2]-(gamma/tau)[3]-delta,delta', psi,chi-beta[4]. Requires Mg(2+) as cofactor. Mn(2+) serves as cofactor.

The catalysed reaction is DNA(n) + a 2'-deoxyribonucleoside 5'-triphosphate = DNA(n+1) + diphosphate. Functionally, DNA polymerase III is a complex, multichain enzyme responsible for most of the replicative synthesis in bacteria. The epsilon subunit contain the editing function and is a proofreading 3'-5' exonuclease. This chain is DNA polymerase III subunit epsilon (dnaQ), found in Buchnera aphidicola subsp. Baizongia pistaciae (strain Bp).